The following is a 284-amino-acid chain: F-box only protein 6 (284 aa).

An F-box domain is found at 1 to 48 (MVNINELPENILLELFTHVPAPQLLRNCRLVCSLWRDLIDVMTLWKRK). The region spanning 69-250 (FYILCSLQRN…VTNSSIIVSH (182 aa)) is the FBA domain. A phosphoserine mark is found at S249, S268, S275, S278, and S283.

Part of a SCF (SKP1-cullin-F-box) protein ligase complex. Interacts with VCP, CHEK1 and CUL1.

It localises to the cytoplasm. Its pathway is protein modification; protein ubiquitination. Functionally, substrate-recognition component of some SCF (SKP1-CUL1-F-box protein)-type E3 ubiquitin ligase complexes. Involved in endoplasmic reticulum-associated degradation pathway (ERAD) for misfolded lumenal proteins by recognizing and binding sugar chains on unfolded glycoproteins that are retrotranslocated into the cytosol and promoting their ubiquitination and subsequent degradation. Able to recognize and bind denatured glycoproteins, which are modified with not only high-mannose but also complex-type oligosaccharides. Also recognizes sulfated glycans. Also involved in DNA damage response by specifically recognizing activated CHEK1 (phosphorylated on 'Ser-345'), promoting its ubiquitination and degradation. Ubiquitination of CHEK1 is required to ensure that activated CHEK1 does not accumulate as cells progress through S phase, or when replication forks encounter transient impediments during normal DNA replication. This chain is F-box only protein 6 (Fbxo6), found in Rattus norvegicus (Rat).